A 62-amino-acid chain; its full sequence is Large ribosomal subunit protein bL28 (62 aa).

Belongs to the bacterial ribosomal protein bL28 family.

This Helicobacter acinonychis (strain Sheeba) protein is Large ribosomal subunit protein bL28.